Reading from the N-terminus, the 332-residue chain is Ferredoxin--NADP reductase (332 aa).

7 residues coordinate FAD: glutamate 35, glutamine 43, tyrosine 48, valine 88, phenylalanine 122, aspartate 286, and serine 326.

The protein belongs to the ferredoxin--NADP reductase type 2 family. As to quaternary structure, homodimer. The cofactor is FAD.

The enzyme catalyses 2 reduced [2Fe-2S]-[ferredoxin] + NADP(+) + H(+) = 2 oxidized [2Fe-2S]-[ferredoxin] + NADPH. This is Ferredoxin--NADP reductase from Limosilactobacillus reuteri (strain DSM 20016) (Lactobacillus reuteri).